Here is an 87-residue protein sequence, read N- to C-terminus: Translation initiation factor IF-1 2 (87 aa).

Residues methionine 1–lysine 72 enclose the S1-like domain.

The protein belongs to the IF-1 family. In terms of assembly, component of the 30S ribosomal translation pre-initiation complex which assembles on the 30S ribosome in the order IF-2 and IF-3, IF-1 and N-formylmethionyl-tRNA(fMet); mRNA recruitment can occur at any time during PIC assembly.

The protein resides in the cytoplasm. Its function is as follows. One of the essential components for the initiation of protein synthesis. Stabilizes the binding of IF-2 and IF-3 on the 30S subunit to which N-formylmethionyl-tRNA(fMet) subsequently binds. Helps modulate mRNA selection, yielding the 30S pre-initiation complex (PIC). Upon addition of the 50S ribosomal subunit IF-1, IF-2 and IF-3 are released leaving the mature 70S translation initiation complex. This Burkholderia ambifaria (strain ATCC BAA-244 / DSM 16087 / CCUG 44356 / LMG 19182 / AMMD) (Burkholderia cepacia (strain AMMD)) protein is Translation initiation factor IF-1 2.